Reading from the N-terminus, the 336-residue chain is Ferredoxin--NADP reductase (336 aa).

FAD is bound by residues threonine 18, glutamate 37, glutamine 45, tyrosine 50, valine 92, phenylalanine 127, aspartate 290, and serine 331.

Belongs to the ferredoxin--NADP reductase type 2 family. In terms of assembly, homodimer. It depends on FAD as a cofactor.

It catalyses the reaction 2 reduced [2Fe-2S]-[ferredoxin] + NADP(+) + H(+) = 2 oxidized [2Fe-2S]-[ferredoxin] + NADPH. In Symbiobacterium thermophilum (strain DSM 24528 / JCM 14929 / IAM 14863 / T), this protein is Ferredoxin--NADP reductase.